Consider the following 418-residue polypeptide: Replication factor C large subunit (418 aa).

Residue glycine 47–threonine 54 coordinates ATP.

The protein belongs to the activator 1 small subunits family. RfcL subfamily. Heteromultimer composed of small subunits (RfcS) and large subunits (RfcL).

Part of the RFC clamp loader complex which loads the PCNA sliding clamp onto DNA. The protein is Replication factor C large subunit of Thermoplasma acidophilum (strain ATCC 25905 / DSM 1728 / JCM 9062 / NBRC 15155 / AMRC-C165).